The following is a 48-amino-acid chain: Ambineela (48 aa).

Monomer. In terms of processing, the blue color is due to an unidentified non-fluorescent cofactor, covalently bound to it.

In terms of biological role, ambineela is a blue protein and has a pI of 8.7. This chain is Ambineela, found in Acidianus ambivalens (Desulfurolobus ambivalens).